Reading from the N-terminus, the 582-residue chain is Aspartate--tRNA ligase (582 aa).

Glu-174 contributes to the L-aspartate binding site. The interval 198-201 (QITK) is aspartate. Arg-220 contributes to the L-aspartate binding site. ATP is bound by residues 220 to 222 (RDE) and Gln-229. His-443 provides a ligand contact to L-aspartate. Glu-477 is a binding site for ATP. L-aspartate is bound at residue Arg-484. Residue 529-532 (GLDR) participates in ATP binding.

Belongs to the class-II aminoacyl-tRNA synthetase family. Type 1 subfamily. Homodimer.

Its subcellular location is the cytoplasm. It carries out the reaction tRNA(Asp) + L-aspartate + ATP = L-aspartyl-tRNA(Asp) + AMP + diphosphate. In terms of biological role, catalyzes the attachment of L-aspartate to tRNA(Asp) in a two-step reaction: L-aspartate is first activated by ATP to form Asp-AMP and then transferred to the acceptor end of tRNA(Asp). The protein is Aspartate--tRNA ligase of Streptococcus pyogenes serotype M28 (strain MGAS6180).